Consider the following 66-residue polypeptide: Large ribosomal subunit protein bL33c (66 aa).

It belongs to the bacterial ribosomal protein bL33 family.

The protein localises to the plastid. It localises to the chloroplast. The sequence is that of Large ribosomal subunit protein bL33c from Oenothera argillicola (Appalachian evening primrose).